The chain runs to 1173 residues: MEDNDISFSIFGNSDDILDNTKKSKSNINNSGSSIFGNGNENNNNMNTNNNNSNQNNNDINYNNNNNNNNNNNSNNSNNSNNNNNNINNNNNRNNNNFNNNNNNNVNYFEQDVDFGENAHSSNYGDNNNIFSDESNNYNNNNNNNDYNNNNYYDNNNYNENYNENYNENYNNNNNNNNNNNNNNNNNNNNNNNNNNNNNYYNENNNQQQLQQNYSNNNYNNEYINNFNNNDNSYNNNNNNNNNNSNFNNYNNNNNGYDNSYSNSNNNNYYDNSNNNSKNDNQYNQQQQYYQEEEQQQQQHEEFEKEIEQKEQDSSPINVNRNPNNSVMIKIGEVEVPEDIYNQKVEKWRNDFNSIFRNLETLEIDYTKATFGLPKDTTVRSIFWRIALGTLSKDPTTWVERTNSSRKKYETFKKNYIINPRNSKDQDADLQQQQQQQQQQQRKPVSLIDDPLSQSEDSLWNQFFDNENAQREISHDISRTYPGLGFFERLDIQDIMIRILFIFSKQYPKIKYLQGMNEILAPILYSVYNDSHWFNNRDVFSKKNYDKKNKQYEHFDFVFDQQYQQDYYPDGPIQYPTNSNNFNGAGSSGSGGSVSRKDGGIGAFLRDPQYFEHDSYFIFESLMTIVGKWFTSPPSSPQPPPRVQGQFKKLYDLSERDASDQAVNIVVVDQCLRMFEDLKFIEPQLYSYLKQDLGIEPHLYSLRWIRIILAQVFPLDSLLILWDSIFKESVTEFLPYICLTMLIMIKDQIIEKDYSECLQVLFHYPVTQDMPMLLNTAYSVREKIQMAKQQYNIPISTPVSTPLPTSLSRRSIKAYPVSTSSTIVNQSTTTNSSSSSTTTSTTSANRGLSHSSQSYRSSSGSGSGSISNQNKGNGQSGIFSSFTSTFKQIINDLNEYNEEFQLAKENEQLKQQKSKLQKEVDTLKETQTHVISRLERILFSFVDFKQKHIHDQDNFESVDAMEKEVTSILNEVLNSQTTIANLNNSKNRLPNKSVQQSTISQQSTTPQQSITQQTSSPNIVLKQQQPITVISQQQQSQQQQSLQQEQQQSTQQQQSTQQEQQSTQQEQQQSTQPQQSQQNNDNSPFQQYNNDNRQEKISLEDEVFFDNQFVSVQSTNKEFQLKTLSLPNVEIHEDDLVEVKTHDSTVDEDEDGNPITEQYNYKQQLEARWGFNK.

4 disordered regions span residues 22-203, 217-324, 425-446, and 823-872; these read KKSK…YYNE, NNYN…RNPN, DQDA…KPVS, and IVNQ…QNKG. 3 stretches are compositionally biased toward low complexity: residues 26–107, 127–203, and 217–290; these read SNIN…NNVN, NNNI…YYNE, and NNYN…QQYY. A coiled-coil region spans residues 163–214; that stretch reads NENYNENYNNNNNNNNNNNNNNNNNNNNNNNNNNNNNYYNENNNQQQLQQNY. The segment covering 299 to 313 has biased composition (basic and acidic residues); it reads QHEEFEKEIEQKEQD. The span at 314–324 shows a compositional bias: polar residues; that stretch reads SSPINVNRNPN. Residues 374-729 enclose the Rab-GAP TBC domain; that stretch reads PKDTTVRSIF…ILWDSIFKES (356 aa). Over residues 431-441 the composition is skewed to low complexity; it reads QQQQQQQQQQQ. Positions 885–930 form a coiled coil; that stretch reads TFKQIINDLNEYNEEFQLAKENEQLKQQKSKLQKEVDTLKETQTHV. A compositionally biased stretch (polar residues) spans 983 to 994; it reads NNSKNRLPNKSV. Disordered stretches follow at residues 983-1015 and 1054-1089; these read NNSK…QQTS and QSTQ…QQYN. Composition is skewed to low complexity over residues 995–1015 and 1054–1078; these read QQST…QQTS and QSTQ…QSQQ. The span at 1079-1089 shows a compositional bias: polar residues; that stretch reads NNDNSPFQQYN.

May act as a GTPase-activating protein for Rab family protein(s). The sequence is that of TBC1 domain family member 5 homolog A (tbc1d5A) from Dictyostelium discoideum (Social amoeba).